A 256-amino-acid polypeptide reads, in one-letter code: Deoxyribose-phosphate aldolase (256 aa).

The Proton donor/acceptor role is filled by Asp-102. Lys-165 (schiff-base intermediate with acetaldehyde) is an active-site residue. Lys-197 acts as the Proton donor/acceptor in catalysis.

The protein belongs to the DeoC/FbaB aldolase family. DeoC type 2 subfamily.

It localises to the cytoplasm. It carries out the reaction 2-deoxy-D-ribose 5-phosphate = D-glyceraldehyde 3-phosphate + acetaldehyde. It participates in carbohydrate degradation; 2-deoxy-D-ribose 1-phosphate degradation; D-glyceraldehyde 3-phosphate and acetaldehyde from 2-deoxy-alpha-D-ribose 1-phosphate: step 2/2. Functionally, catalyzes a reversible aldol reaction between acetaldehyde and D-glyceraldehyde 3-phosphate to generate 2-deoxy-D-ribose 5-phosphate. In Shewanella sp. (strain W3-18-1), this protein is Deoxyribose-phosphate aldolase.